The chain runs to 126 residues: uncharacterized protein (126 aa).

Transmembrane regions (helical) follow at residues L21–S43 and S48–L70.

Its subcellular location is the membrane. This is an uncharacterized protein from Saccharomyces cerevisiae (strain ATCC 204508 / S288c) (Baker's yeast).